We begin with the raw amino-acid sequence, 649 residues long: Microtubule-associated protein VP6 (649 aa).

It is found in the virion. It localises to the host cytoplasm. The protein resides in the host cytoskeleton. Functionally, minor inner capsid component. Displays NTPase and RNA 5'-triphosphatase (RTPase) activities. May function as a cofactor of polymerase VP2. Associates with microtubules and plays a role in the formation, structural organization and morphology of viral inclusions, where the assembly of cores and the replication of viral RNA occur. This is Microtubule-associated protein VP6 (S6) from Cryphonectria parasitica (Chestnut blight fungus).